We begin with the raw amino-acid sequence, 353 residues long: Outer membrane protein P5 (353 aa).

An N-terminal signal peptide occupies residues 1–21 (MKKTAIALVVAGLAAASVAQA). The next 8 membrane-spanning stretches (beta stranded) occupy residues 27-37 (TFYAGVKAGQA), 58-69 (SFTYGVFGGYQI), 77-85 (LAVELGYDD), 104-115 (HGTHLSLKGSYE), 120-128 (LDVYGKAGV), 158-167 (GLFAVGAEYA), 172-179 (LAVRLEYQ), and 205-213 (SINAGISYR). The OmpA-like domain maps to 227 to 353 (VVSKTFSLNS…RVEIAVNGTK (127 aa)). Cysteine 326 and cysteine 338 form a disulfide bridge.

It belongs to the outer membrane OOP (TC 1.B.6) superfamily. OmpA family. In terms of assembly, monomer and homodimer.

It localises to the cell outer membrane. With TolR probably plays a role in maintaining the position of the peptidoglycan cell wall in the periplasm. Acts as a porin with low permeability that allows slow penetration of small solutes; an internal gate slows down solute passage. In terms of biological role, reconstitution in planar bilayers with lithium dodecyl sulfate-solublized P5 yields narrow pores (58 pS conductance) with a low probability of opening, whereas n-octyl-bD-glucopyranoside-solubilized P5 forms large pores (1.1 nS conductance) with high open probability. The large pore easily converts to the smaller pore at room temperature; at 42 degrees Celsius the smaller pore converts to the larger one. The chain is Outer membrane protein P5 from Haemophilus influenzae (strain ATCC 51907 / DSM 11121 / KW20 / Rd).